The sequence spans 383 residues: Trichodiene synthase (383 aa).

Belongs to the trichodiene synthase family.

The catalysed reaction is (2E,6E)-farnesyl diphosphate = trichodiene + diphosphate. The protein operates within sesquiterpene biosynthesis; trichothecene biosynthesis. TS is a member of the terpene cyclase group of enzymes. It catalyzes the isomerization and cyclization of farnesyl pyro-phosphate to form trichodiene, the first cyclic intermediate in the biosynthetic pathway for trichothecenes. It serves to branch trichothecene biosynthesis from the isoprenoid pathway. In Gibberella pulicaris, this protein is Trichodiene synthase (TRI5).